The following is a 182-amino-acid chain: Isopentenyl-diphosphate Delta-isomerase (182 aa).

Mn(2+) is bound by residues His-25 and His-32. The Nudix hydrolase domain maps to 30 to 164 (PLHLAFSCWL…PWAFSPWMVM (135 aa)). Cys-67 is a catalytic residue. His-69 is a Mn(2+) binding site. Residue Glu-87 participates in Mg(2+) binding. The Mn(2+) site is built by Glu-114 and Glu-116. Glu-116 is a catalytic residue.

The protein belongs to the IPP isomerase type 1 family. In terms of assembly, homodimer. The cofactor is Mg(2+). Requires Mn(2+) as cofactor.

The protein resides in the cytoplasm. The enzyme catalyses isopentenyl diphosphate = dimethylallyl diphosphate. Its pathway is isoprenoid biosynthesis; dimethylallyl diphosphate biosynthesis; dimethylallyl diphosphate from isopentenyl diphosphate: step 1/1. Catalyzes the 1,3-allylic rearrangement of the homoallylic substrate isopentenyl (IPP) to its highly electrophilic allylic isomer, dimethylallyl diphosphate (DMAPP). In Salmonella arizonae (strain ATCC BAA-731 / CDC346-86 / RSK2980), this protein is Isopentenyl-diphosphate Delta-isomerase.